The following is a 152-amino-acid chain: uncharacterized protein (152 aa).

The chain crosses the membrane as a helical span at residues 7–27 (TLSVIVFLISLIIIFGIYFSS).

It is found in the membrane. This is an uncharacterized protein from Methanocaldococcus jannaschii (strain ATCC 43067 / DSM 2661 / JAL-1 / JCM 10045 / NBRC 100440) (Methanococcus jannaschii).